Reading from the N-terminus, the 399-residue chain is Probable aspartate/prephenate aminotransferase (399 aa).

L-aspartate is bound by residues Gly39, Trp125, and Asn175. Lys239 carries the post-translational modification N6-(pyridoxal phosphate)lysine. Residue Arg375 coordinates L-aspartate.

Belongs to the class-I pyridoxal-phosphate-dependent aminotransferase family. In terms of assembly, homodimer. Pyridoxal 5'-phosphate is required as a cofactor.

The protein resides in the cytoplasm. The enzyme catalyses L-aspartate + 2-oxoglutarate = oxaloacetate + L-glutamate. It carries out the reaction L-arogenate + 2-oxoglutarate = prephenate + L-glutamate. Its function is as follows. Catalyzes the reversible conversion of aspartate and 2-oxoglutarate to glutamate and oxaloacetate. Can also transaminate prephenate in the presence of glutamate. The chain is Probable aspartate/prephenate aminotransferase (aatA) from Rickettsia bellii (strain RML369-C).